The primary structure comprises 478 residues: MTSLPDRGVSSSSSDPLCEGNIAPCSSSSEQKEDCSLKQSKTSILSCVFNSPFNIFEAHQDSSANKSPKSSSGSYDWLRVLRRIVCSGSMWRFLGTSKVLTSSDVWFLGKCYKLSSEESSSDSDSESGHATFLEDFSSRIWITYRRGFDAISDSKYTSDVNWGCMVRSSQMLVAQALIFHHLGRSWRRPSEKPYNPEYIGILHMFGDSEACAFSIHNLLQAGNSYGLAAGSWVGPYAMCRAWQTLVRTNREQHEVVDGNESFPMALYVVSGDEDGERGGAPVVCIDVAAQLCCDFNKGQSTWSPILLLVPLVLGLDKINPRYIPLLKETFTFPQSLGILGGKPGTSTYIAGVQDDRALYLDPHEVQMAVDIAADNIEADTSSYHCSTVRDLALDLIDPSLAIGFYCRDKDDFDDFCSRATELVDKANGAPLFTVVQSVQPSKQMYNQDDVLGISGDGNINVEDLDASGETGEEEWQIL.

Over residues 1–15 (MTSLPDRGVSSSSSD) the composition is skewed to polar residues. Residues 1–20 (MTSLPDRGVSSSSSDPLCEG) form a disordered region. Cys164 functions as the Nucleophile in the catalytic mechanism. Residues Asp361 and His363 contribute to the active site.

It belongs to the peptidase C54 family. Interacts with ATG8. Constitutively expressed.

It is found in the cytoplasm. It catalyses the reaction [protein]-C-terminal L-amino acid-glycyl-phosphatidylethanolamide + H2O = [protein]-C-terminal L-amino acid-glycine + a 1,2-diacyl-sn-glycero-3-phosphoethanolamine. Functionally, cysteine protease that plays a key role in autophagy by mediating both proteolytic activation and delipidation of ATG8 family proteins. The protease activity is required for proteolytic activation of ATG8 family proteins: cleaves the C-terminal amino acid of ATG8 proteins to reveal a C-terminal glycine. Exposure of the glycine at the C-terminus is essential for ATG8 proteins conjugation to phosphatidylethanolamine (PE) and insertion to membranes, which is necessary for autophagy. In addition to the protease activity, also mediates delipidation of PE-conjugated ATG8 proteins. This Oryza sativa subsp. indica (Rice) protein is Cysteine protease ATG4B (ATG4B).